A 444-amino-acid polypeptide reads, in one-letter code: Methylenetetrahydrofolate--tRNA-(uracil-5-)-methyltransferase TrmFO (444 aa).

FAD is bound at residue 11–16; it reads GGGLAG.

It belongs to the MnmG family. TrmFO subfamily. The cofactor is FAD.

The protein localises to the cytoplasm. The catalysed reaction is uridine(54) in tRNA + (6R)-5,10-methylene-5,6,7,8-tetrahydrofolate + NADH + H(+) = 5-methyluridine(54) in tRNA + (6S)-5,6,7,8-tetrahydrofolate + NAD(+). It catalyses the reaction uridine(54) in tRNA + (6R)-5,10-methylene-5,6,7,8-tetrahydrofolate + NADPH + H(+) = 5-methyluridine(54) in tRNA + (6S)-5,6,7,8-tetrahydrofolate + NADP(+). Functionally, catalyzes the folate-dependent formation of 5-methyl-uridine at position 54 (M-5-U54) in all tRNAs. This chain is Methylenetetrahydrofolate--tRNA-(uracil-5-)-methyltransferase TrmFO, found in Desulfotalea psychrophila (strain LSv54 / DSM 12343).